An 83-amino-acid polypeptide reads, in one-letter code: Gas vesicle protein G2 (83 aa).

Belongs to the gas vesicle GvpG family. In terms of assembly, gvpF to GvpM interact with each other in vitro, and may form multi-subunit complex(es).

Its subcellular location is the gas vesicle. Its function is as follows. Proteins GvpF to GvpM might be involved in nucleating gas vesicle formation. A minor component of the gas vesicle. Gas vesicles are hollow, gas filled proteinaceous nanostructures found in several microbial planktonic microorganisms. They allow positioning of halobacteria at the optimal depth for growth in the poorly aerated, shallow brine pools of their habitat. In terms of biological role, expression of 2 c-vac DNA fragments containing 2 divergently transcribed regions (gvpE-gvpF-gvpG-gvpH-gvpI-gvpJ-gvpK-gvpL-gvpM and gvpA-gvpC-gvpN-gvpO) allows H.volcanii to produce gas vesicles. The sequence is that of Gas vesicle protein G2 from Halobacterium salinarum (strain ATCC 700922 / JCM 11081 / NRC-1) (Halobacterium halobium).